A 273-amino-acid polypeptide reads, in one-letter code: MNDSQAIIEEAFERRAEISPRKAETLVKDAVEEALHLLDTGEARVAEKQNGEWIVNEWLKKAVLLSFRLSDNVFIKGGYTNYFDKVPSKYADYSSRDFRQDEVRIVPPASVRKGAFIAPSVVLMPSYVNIGAYVDRGTMVDTWATVGSCAQIGKNVHLSGGVGIGGVLEPLQAKPTIIEDNCFIGARSEIVEGVIVEEGSVISMGVFIGQSTRIYHRETGTISYGRVPAGSVVVPGNLPSQDGKYSLYCAIIVKQVDERTRSKVGINELLRNI.

Positions 104 and 141 each coordinate substrate.

It belongs to the transferase hexapeptide repeat family. Homotrimer.

It is found in the cytoplasm. It catalyses the reaction (S)-2,3,4,5-tetrahydrodipicolinate + succinyl-CoA + H2O = (S)-2-succinylamino-6-oxoheptanedioate + CoA. The protein operates within amino-acid biosynthesis; L-lysine biosynthesis via DAP pathway; LL-2,6-diaminopimelate from (S)-tetrahydrodipicolinate (succinylase route): step 1/3. The protein is 2,3,4,5-tetrahydropyridine-2,6-dicarboxylate N-succinyltransferase of Nitrosococcus oceani (strain ATCC 19707 / BCRC 17464 / JCM 30415 / NCIMB 11848 / C-107).